A 65-amino-acid polypeptide reads, in one-letter code: Conotoxin VnMLCL-041 (65 aa).

The signal sequence occupies residues 1–19; that stretch reads MLCLPVFIILLLLASPAAP. Positions 20 to 43 are excised as a propeptide; it reads NPLQTRIQSNLIRAGPEDANIKTD. Lysine amide is present on Lys64.

It belongs to the conotoxin T superfamily. Expressed by the venom duct.

It is found in the secreted. This is Conotoxin VnMLCL-041 from Conus ventricosus (Mediterranean cone).